A 244-amino-acid polypeptide reads, in one-letter code: Cobalt transport protein CbiM (244 aa).

An N-terminal signal peptide occupies residues 1–20; that stretch reads MRKITFIAALLSLLPRYALA. The next 6 membrane-spanning stretches (helical) occupy residues 31-51, 63-83, 95-115, 117-137, 161-181, and 201-221; these read KWCL…LIYI, ILLG…LPSV, LGAI…VLLF, ALLL…SMAV, VFLG…LQLA, and IFAV…VIVL.

The protein belongs to the CbiM family. In terms of assembly, forms an energy-coupling factor (ECF) transporter complex composed of an ATP-binding protein (A component, CbiO), a transmembrane protein (T component, CbiQ) and 2 possible substrate-capture proteins (S components, CbiM and CbiN) of unknown stoichimetry.

It is found in the cell membrane. Its pathway is cofactor biosynthesis; adenosylcobalamin biosynthesis. Functionally, part of the energy-coupling factor (ECF) transporter complex CbiMNOQ involved in cobalt import. In Thermosediminibacter oceani (strain ATCC BAA-1034 / DSM 16646 / JW/IW-1228P), this protein is Cobalt transport protein CbiM.